The chain runs to 153 residues: Aspartate carbamoyltransferase regulatory chain (153 aa).

Zn(2+)-binding residues include C109, C114, C138, and C141.

It belongs to the PyrI family. As to quaternary structure, contains catalytic and regulatory chains. Zn(2+) serves as cofactor.

In terms of biological role, involved in allosteric regulation of aspartate carbamoyltransferase. This chain is Aspartate carbamoyltransferase regulatory chain, found in Vibrio vulnificus (strain CMCP6).